Reading from the N-terminus, the 498-residue chain is ADP,ATP carrier protein 1 (498 aa).

Residues 1–33 (MSTSKSENYLSELRKIIWPIEQHENKKFLPLAF) are Cytoplasmic-facing. The helical transmembrane segment at 34–54 (MMFCILLNYSTLRSIKDGFVV) threads the bilayer. C37 and C85 are disulfide-bonded. Over 55-67 (TDIGTESISFLKT) the chain is Extracellular. The helical transmembrane segment at 68 to 88 (YIVLPSAVIAMVIYVKLCDIL) threads the bilayer. Over 89 to 92 (KQEN) the chain is Cytoplasmic. Residues 93-113 (IFYVITSFFLGYFALFAFVLY) traverse the membrane as a helical segment. Residues 114-147 (PYPDLVHPDHKTIESLSLAYPNFKWFIKIVGKWS) are Extracellular-facing. The helical transmembrane segment at 148 to 168 (FASFYTIAELWGTMMLSLLFW) threads the bilayer. Over 169–184 (QFANQITKITEAKRFY) the chain is Cytoplasmic. Residues 185–205 (SMFGLLANLALPVTSVVIGYF) traverse the membrane as a helical segment. Over 206–218 (LHEKTQIVSEHLK) the chain is Extracellular. The chain crosses the membrane as a helical span at residues 219–239 (FIPLFVIMITSSFLIILTYRW). Topologically, residues 240-279 (MNKNVLTDPRLYDPTLVKEKKAKAKLSFIESFKMIFTSKY) are cytoplasmic. Residues 280–300 (VGYIALLIIAYGVSVNLVEGV) form a helical membrane-spanning segment. Residues 301–320 (WKSKVKELYPTKEAYTIYMG) are Extracellular-facing. A helical membrane pass occupies residues 321–341 (QFQFYQGWVAIAFMLIGSNIL). Over 342–348 (RKVSWLT) the chain is Cytoplasmic. The helical transmembrane segment at 349 to 369 (AAMITPLMMFITGAAFFSFIF) threads the bilayer. At 370 to 379 (FDSVIAMNLT) the chain is on the extracellular side. A helical membrane pass occupies residues 380–400 (GILASSPLTLAVMFGMIQNVL). Residues 401 to 438 (SKGVKYSLFDATKNMAYIPLDKDLRVKGQAAVEVIGGR) are Cytoplasmic-facing. 436-442 (GGRLGKS) contributes to the ATP binding site. Residues 439–459 (LGKSGGAIIQSTFFILFPAFG) traverse the membrane as a helical segment. Residues 460-465 (FIEATP) are Extracellular-facing. Residues 466 to 486 (YFASIFFIIVILWIFAVKGLN) form a helical membrane-spanning segment. Residues 487–498 (KEYQVLVNKNEN) lie on the Cytoplasmic side of the membrane.

The protein belongs to the ADP/ATP translocase tlc family.

The protein localises to the cell membrane. Its function is as follows. Provides the rickettsial cell with host ATP in exchange for rickettsial ADP. This is an obligate exchange system. This energy acquiring activity is an important component of rickettsial parasitism. The polypeptide is ADP,ATP carrier protein 1 (tlcA) (Rickettsia typhi (strain ATCC VR-144 / Wilmington)).